Consider the following 239-residue polypeptide: MQQDLFGSDSICPISSDDVLKATDPNFESWRERIVQDALKIVEQIPKWKHLGNHDGVALYEKAPAYTGHTWYGRVSKHTRSLKTFKKGLLYEHIKKEADYDPLVFSAHQLETIIEDEIEIWMYKYKTPWFFRNRVYRQLVVSVMLDPDSFIVLQTPVTYPGSSSGGGNGVVALYDSVDFVSKKLDGDGKEEGVLWICAVRNDYGSMFSGLFSDTTFTKSLVRQVKLYNEWLNRTYPRKG.

It is found in the endoplasmic reticulum. The protein localises to the golgi apparatus. This is an uncharacterized protein from Schizosaccharomyces pombe (strain 972 / ATCC 24843) (Fission yeast).